We begin with the raw amino-acid sequence, 252 residues long: Imidazole glycerol phosphate synthase subunit HisF (252 aa).

Catalysis depends on residues D11 and D130.

Belongs to the HisA/HisF family. Heterodimer of HisH and HisF.

Its subcellular location is the cytoplasm. It carries out the reaction 5-[(5-phospho-1-deoxy-D-ribulos-1-ylimino)methylamino]-1-(5-phospho-beta-D-ribosyl)imidazole-4-carboxamide + L-glutamine = D-erythro-1-(imidazol-4-yl)glycerol 3-phosphate + 5-amino-1-(5-phospho-beta-D-ribosyl)imidazole-4-carboxamide + L-glutamate + H(+). The protein operates within amino-acid biosynthesis; L-histidine biosynthesis; L-histidine from 5-phospho-alpha-D-ribose 1-diphosphate: step 5/9. In terms of biological role, IGPS catalyzes the conversion of PRFAR and glutamine to IGP, AICAR and glutamate. The HisF subunit catalyzes the cyclization activity that produces IGP and AICAR from PRFAR using the ammonia provided by the HisH subunit. The sequence is that of Imidazole glycerol phosphate synthase subunit HisF from Polynucleobacter asymbioticus (strain DSM 18221 / CIP 109841 / QLW-P1DMWA-1) (Polynucleobacter necessarius subsp. asymbioticus).